A 733-amino-acid chain; its full sequence is MERRSESPCLRDSPDRRSGSPDVKGPPPVKVARLEQNGSPMGARGRPNGAVAKAVGGLMIPVFCVVEQLDGSLEYDNREEHAEFVLVRKDVLFSQLVETALLALGYSHSSAAQAQGIIKLGRWNPLPLSYVTDAPDATVADMLQDVYHVVTLKIQLQSCSKLEDLPAEQWNHATVRNALKELLKEMNQSTLAKECPLSQSMISSIVNSTYYANVSATKCQEFGRWYKKYKKIKVERVERENLSDYCVLGQRPMHLPNMNQLASLGKTNEQSPHSQIHHSTPIRNQVPALQPIMSPGLLSPQLSPQLVRQQIAMAHLINQQIAVSRLLAHQHPQAINQQFLNHPPIPRAVKPEPTNSSVEVSPDIYQQVRDELKRASVSQAVFARVAFNRTQGLLSEILRKEEDPRTASQSLLVNLRAMQNFLNLPEVERDRIYQDERERSMNPNVSMVSSASSSPSSSRTPQAKTSTPTTDLPIKVDGANVNITAAIYDEIQQEMKRAKVSQALFAKVAANKSQGWLCELLRWKENPSPENRTLWENLCTIRRFLNLPQHERDVIYEEESRHHHSERMQHVVQLPPEPVQVLHRQQSQPTKESSPPREEAPPPPPPTEDSCAKKPRSRTKISLEALGILQSFIHDVGLYPDQEAIHTLSAQLDLPKHTIIKFFQNQRYHVKHHGKLKEHLGSAVDVAEYKDEELLTESEENDSEEGSEEMYKVEAEEENADKSKAAPAETDQR.

The tract at residues 1–47 (MERRSESPCLRDSPDRRSGSPDVKGPPPVKVARLEQNGSPMGARGRP) is disordered. Residue serine 20 is modified to Phosphoserine. Residues lysine 24 and lysine 30 each participate in a glycyl lysine isopeptide (Lys-Gly) (interchain with G-Cter in SUMO2) cross-link. Serine 39 carries the post-translational modification Phosphoserine. The CMP domain occupies 57–158 (GLMIPVFCVV…VVTLKIQLQS (102 aa)). Residue lysine 161 forms a Glycyl lysine isopeptide (Lys-Gly) (interchain with G-Cter in SUMO2) linkage. Residues 161–234 (KLEDLPAEQW…WYKKYKKIKV (74 aa)) enclose the CUTL domain. A Glycyl lysine isopeptide (Lys-Gly) (interchain with G-Cter in SUMO) cross-link involves residue lysine 233. Lysine 350 participates in a covalent cross-link: Glycyl lysine isopeptide (Lys-Gly) (interchain with G-Cter in SUMO); alternate. Lysine 350 participates in a covalent cross-link: Glycyl lysine isopeptide (Lys-Gly) (interchain with G-Cter in SUMO2); alternate. Residues 350-437 (KPEPTNSSVE…ERDRIYQDER (88 aa)) constitute a DNA-binding region (CUT 1). A disordered region spans residues 435–473 (DERERSMNPNVSMVSSASSSPSSSRTPQAKTSTPTTDLP). Residues 441-458 (MNPNVSMVSSASSSPSSS) are compositionally biased toward low complexity. Serine 454 carries the phosphoserine modification. Polar residues predominate over residues 459–470 (RTPQAKTSTPTT). At threonine 467 the chain carries Phosphothreonine. The CUT 2 DNA-binding region spans 473–560 (PIKVDGANVN…ERDVIYEEES (88 aa)). Lysine 475 is covalently cross-linked (Glycyl lysine isopeptide (Lys-Gly) (interchain with G-Cter in SUMO2)). Disordered regions lie at residues 580–617 (QVLH…KPRS) and 691–733 (DEEL…TDQR). A Phosphoserine modification is found at serine 594. The homeobox DNA-binding region spans 615–674 (PRSRTKISLEALGILQSFIHDVGLYPDQEAIHTLSAQLDLPKHTIIKFFQNQRYHVKHHG). Acidic residues predominate over residues 694-708 (LLTESEENDSEEGSE). The span at 709 to 733 (EMYKVEAEEENADKSKAAPAETDQR) shows a compositional bias: basic and acidic residues. Lysine 724 participates in a covalent cross-link: Glycyl lysine isopeptide (Lys-Gly) (interchain with G-Cter in SUMO2).

It belongs to the CUT homeobox family. As to quaternary structure, interacts with PIAS1. Interacts with ATF4 and RUNX2; resulting in enhanced DNA binding and transactivation by these transcription factors. Sumoylated by PIAS1. Sumoylation promotes nuclear localization, but represses transcription factor activity. As to expression, expressed in cortical neurons that extend axons across the corpus callosum. Also expressed in branchial arches and in cells of the osteoblast lineage, but not in chondrocytes and osteoclasts.

The protein localises to the nucleus matrix. Binds to DNA, at nuclear matrix- or scaffold-associated regions. Thought to recognize the sugar-phosphate structure of double-stranded DNA. Transcription factor controlling nuclear gene expression, by binding to matrix attachment regions (MARs) of DNA and inducing a local chromatin-loop remodeling. Acts as a docking site for several chromatin remodeling enzymes and also by recruiting corepressors (HDACs) or coactivators (HATs) directly to promoters and enhancers. Required for the initiation of the upper-layer neurons (UL1) specific genetic program and for the inactivation of deep-layer neurons (DL) and UL2 specific genes, probably by modulating Bcl11b expression. Repressor of Ctip2 and regulatory determinant of corticocortical connections in the developing cerebral cortex. May play an important role in palate formation. Acts as a molecular node in a transcriptional network regulating skeletal development and osteoblast differentiation. The sequence is that of DNA-binding protein SATB2 (Satb2) from Mus musculus (Mouse).